A 288-amino-acid polypeptide reads, in one-letter code: MNVTAKYELIGLMAYPIRHSLSPEMQNKALEKAGLPFTYMAFEVDNDSFPAAIEGLKALKMRGTGVSMPNKQLACEYVDELTPAAKLVGAINTIVNDDGYLRGYNTDGTGHIRAIKESGFDIKGKTMVLLGAGGASTAIGAQGAIEGLKEIKLFNRRDEFFDKALAFAQRVNENTDCVVTVTDLADQQAFAEALASADILTNGTKVGMKPLENESLVHDISLLHPGLLVTECVYNPHMTKLLQQAQQAGCKTIDGYGMLLWQGAEQFTLWTGKDFPLEYVKQVMGFGA.

The substrate site is built by Lys71 and Asp107. NAD(+) contacts are provided by residues 132–135 (AGGA), 155–158 (NRRD), Lys205, 232–235 (CVYN), and Gly255.

Belongs to the shikimate dehydrogenase family. As to quaternary structure, homodimer.

The enzyme catalyses L-quinate + NAD(+) = 3-dehydroquinate + NADH + H(+). The catalysed reaction is L-quinate + NADP(+) = 3-dehydroquinate + NADPH + H(+). It catalyses the reaction shikimate + NADP(+) = 3-dehydroshikimate + NADPH + H(+). It carries out the reaction shikimate + NAD(+) = 3-dehydroshikimate + NADH + H(+). Its pathway is metabolic intermediate biosynthesis; chorismate biosynthesis; chorismate from D-erythrose 4-phosphate and phosphoenolpyruvate: step 4/7. Its function is as follows. The actual biological function of YdiB remains unclear, nor is it known whether 3-dehydroshikimate or quinate represents the natural substrate. Catalyzes the reversible NAD-dependent reduction of both 3-dehydroshikimate (DHSA) and 3-dehydroquinate to yield shikimate (SA) and quinate, respectively. It can use both NAD or NADP for catalysis, however it has higher catalytic efficiency with NAD. The sequence is that of Quinate/shikimate dehydrogenase from Escherichia coli (strain SMS-3-5 / SECEC).